The primary structure comprises 427 residues: Histidinol dehydrogenase (427 aa).

Serine 232, glutamine 254, and histidine 257 together coordinate substrate. 2 residues coordinate Zn(2+): glutamine 254 and histidine 257. Active-site proton acceptor residues include glutamate 322 and histidine 323. Substrate contacts are provided by histidine 323, aspartate 356, glutamate 410, and histidine 415. A Zn(2+)-binding site is contributed by aspartate 356. Residue histidine 415 participates in Zn(2+) binding.

It belongs to the histidinol dehydrogenase family. Zn(2+) is required as a cofactor.

The enzyme catalyses L-histidinol + 2 NAD(+) + H2O = L-histidine + 2 NADH + 3 H(+). It functions in the pathway amino-acid biosynthesis; L-histidine biosynthesis; L-histidine from 5-phospho-alpha-D-ribose 1-diphosphate: step 9/9. Its function is as follows. Catalyzes the sequential NAD-dependent oxidations of L-histidinol to L-histidinaldehyde and then to L-histidine. The chain is Histidinol dehydrogenase from Listeria monocytogenes serovar 1/2a (strain ATCC BAA-679 / EGD-e).